The sequence spans 458 residues: tRNA modification GTPase MnmE (458 aa).

3 residues coordinate (6S)-5-formyl-5,6,7,8-tetrahydrofolate: Arg26, Glu88, and Arg127. The region spanning 224–378 is the TrmE-type G domain; it reads GLSTAIIGRP…IEDRINQLFF (155 aa). Asn234 is a binding site for K(+). Residues 234 to 239, 253 to 259, and 278 to 281 each bind GTP; these read NVGKSS, TDIAGTT, and DTAG. Position 238 (Ser238) interacts with Mg(2+). 3 residues coordinate K(+): Thr253, Ile255, and Thr258. Thr259 contacts Mg(2+). Lys458 is a (6S)-5-formyl-5,6,7,8-tetrahydrofolate binding site.

This sequence belongs to the TRAFAC class TrmE-Era-EngA-EngB-Septin-like GTPase superfamily. TrmE GTPase family. Homodimer. Heterotetramer of two MnmE and two MnmG subunits. Requires K(+) as cofactor.

It is found in the cytoplasm. In terms of biological role, exhibits a very high intrinsic GTPase hydrolysis rate. Involved in the addition of a carboxymethylaminomethyl (cmnm) group at the wobble position (U34) of certain tRNAs, forming tRNA-cmnm(5)s(2)U34. The sequence is that of tRNA modification GTPase MnmE from Streptococcus pyogenes serotype M3 (strain ATCC BAA-595 / MGAS315).